The sequence spans 481 residues: Guanine nucleotide exchange factor C9orf72 homolog (481 aa).

The region spanning 23-194 is the uDENN C9ORF72-type domain; the sequence is SPLLAATFAY…ELLASMKSHS (172 aa). The cDENN C9ORF72-type domain occupies 200-343; sequence DIADTVLNDD…SELTAFWRAT (144 aa). The dDENN C9ORF72-type domain maps to 370–464; that stretch reads VLHRDTLVKA…IKPGLHSFIF (95 aa). A required for the homodimerization of the C9orf72-SMCR8 complex region spans residues 461–481; the sequence is SFIFGRPFYTSVQERDVLMTF.

As to quaternary structure, component of the C9orf72-SMCR8 complex, at least composed of C9orf72, SMCR8 and WDR41. The complex is formed of two protomers, each individually consisting of one molecule each of C9orf72, SMCR8 and WDR41. The protomers homodimerize via an interaction between C9orf72 (via C-terminus) and SMCR8 (via N-terminus). Within each protomer SMCR8 (via DENN domain) acts as a bridging protein between WDR41 (via C-terminus and N-terminus) and C9orf72 (via C-terminus). The C9orf72-SMCR8 complex associates with the ULK1/ATG1 kinase complex. Interacts with ULK1/ATG1 kinase complex members ULK1, ATG13 and RB1CC1. Interacts with SMCR8; the interaction is direct. Interacts with HNRNPA1, HNRNPA2B1 and UBQLN2. Interacts with small Rab GTPase RAB1A; the interaction mediates recruitment of RAB1A to the ULK1/ATG1 kinase complex. Also interacts with small Rab GTPase RAB7A. Interacts with cofilin. Interacts with GTP-binding proteins ARF1 and ARF6. Interacts with the DLG4/PSD-95. Interacts with CARM1 (via PH domain-like fold). Interacts with RAB39A and RAB39B (in GDP-bound forms); functions as GEF for RAB39A and RAB39B. In terms of tissue distribution, expressed in postnatal cerebellum and cortex (at protein level). Neuronal expression is detected in several regions of the adult brain and spinal cord. Prominent expression also observed in embryonic and early postnatal neurons including retinal ganglion cells, sensory neurons in the olfactory epithelium and in dorsal root ganglia, and spinal motor neurons. Expressed in the developing cerebral cortex, cerebellum, olfactory bulb, hippocampus and spinal cord in the embryo and in P0 cortical neurons and astrocytes. Also expressed in non-neuronal tissues such as kidney and tooth. In the spleen, highly expressed in myeloid cells compared to B cell and T cell populations where expression is much lower. In the brain, highly expressed in microglia. As to expression, expressed in the forebrain, including in the glomerular layer of the olfactory bulb (at protein level).

The protein localises to the nucleus. The protein resides in the cytoplasm. Its subcellular location is the P-body. It localises to the stress granule. It is found in the endosome. The protein localises to the lysosome. The protein resides in the cytoplasmic vesicle. Its subcellular location is the autophagosome. It localises to the autolysosome. It is found in the secreted. The protein localises to the cell projection. The protein resides in the axon. Its subcellular location is the growth cone. It localises to the perikaryon. It is found in the dendrite. The protein localises to the presynapse. The protein resides in the postsynapse. Functionally, acts as a guanine-nucleotide releasing factor (GEF) for Rab GTPases by promoting the conversion of inactive RAB-GDP to the active form RAB-GTP. Acts as a GEF for RAB39A which enables HOPS-mediated autophagosome-lysosome membrane tethering and fusion in mammalian autophagy. Component of the C9orf72-SMCR8 complex where both subunits display GEF activity and that regulates autophagy. As part of the C9orf72-SMCR8-WDR41 (CSW) complex, functions as GEF for RAB8A, and RAB39B, thereby promoting autophagosome maturation. As part of the C9orf72-SMCR8 complex, also functions as GTPase activating protein (GAP) for RAB8A and RAB11A in vitro. The C9orf72-SMCR8 complex also acts as a regulator of autophagy initiation by interacting with the ULK1/ATG1 kinase complex and modulating its protein kinase activity. Promotes initiation of autophagy by regulating the RAB1A-dependent trafficking of the ULK1/ATG1 kinase complex to the phagophore which leads to autophagosome formation. Acts as a regulator of mTORC1 signaling by promoting phosphorylation of mTORC1 substrates. Plays a role in endosomal trafficking. May be involved in regulating the maturation of phagosomes to lysosomes. Promotes the lysosomal localization and lysosome-mediated degradation of CARM1 which leads to inhibition of starvation-induced lipid metabolism. Regulates actin dynamics in motor neurons by inhibiting the GTP-binding activity of ARF6, leading to ARF6 inactivation. This reduces the activity of the LIMK1 and LIMK2 kinases which are responsible for phosphorylation and inactivation of CFL1/cofilin, leading to cofilin activation. Positively regulates axon extension and axon growth cone size in spinal motor neurons. Required for SMCR8 protein expression and localization at pre- and post-synaptic compartments in the forebrain, also regulates protein abundance of RAB3A and GRIA1/GLUR1 in post-synaptic compartments in the forebrain and hippocampus. Plays a role within the hematopoietic system in restricting inflammation and the development of autoimmunity. In Mus musculus (Mouse), this protein is Guanine nucleotide exchange factor C9orf72 homolog.